We begin with the raw amino-acid sequence, 303 residues long: Holdfast attachment protein D (303 aa).

The span at 266–281 shows a compositional bias: polar residues; that stretch reads SARSTMSGPKSCSTTF. Residues 266 to 303 form a disordered region; the sequence is SARSTMSGPKSCSTTFRPIRAAASRRPPASAGTRAMTR. Residues 282–303 are compositionally biased toward low complexity; sequence RPIRAAASRRPPASAGTRAMTR.

The protein resides in the cell outer membrane. Functionally, involved in attachment of the holdfast to the cell. The holdfast is a structure that allows the bacteria to firmly adhere to surfaces. The protein is Holdfast attachment protein D (hfaD) of Caulobacter vibrioides (strain ATCC 19089 / CIP 103742 / CB 15) (Caulobacter crescentus).